We begin with the raw amino-acid sequence, 285 residues long: mRNA decay factor CTH2 (285 aa).

The required for mRNA decay activity stretch occupies residues I37 to N55. Residues L132–E164 are disordered. Over residues S153–E164 the composition is skewed to polar residues. 2 consecutive C3H1-type zinc fingers follow at residues L169 to G197 and N207 to D235. Residues S252–K271 are disordered.

In terms of assembly, interacts with DHH1.

The protein resides in the nucleus. It is found in the cytoplasm. The protein localises to the P-body. Functionally, binds to specific AU-rich elements (ARE) in the 3'-untranslated region of target mRNAs and promotes their degradation. In response to iron deficiency, promotes the decay of many mRNAs encoding proteins involved in iron-dependent pathways. Recruits the DHH1 helicase to the SDH4 mRNA and promotes SDH4 mRNA decay. Also destabilizes target mRNA by modulating 3'-end processing, creating extended transcripts that are prone for degradation. The chain is mRNA decay factor CTH2 (TIS11) from Saccharomyces cerevisiae (strain ATCC 204508 / S288c) (Baker's yeast).